The primary structure comprises 955 residues: Alpha-1,4 glucan phosphorylase L isozyme, chloroplastic/amyloplastic (955 aa).

A chloroplast-targeting transit peptide spans 1 to 43; it reads MSRLSGITPRARDDRSQFQNPRLEIAVPDRTAGLQRTKRTLLV. The segment at 522–550 is disordered; it reads KVVTESEKDELEEKDTELEKDEDPVPAPI. The segment covering 528-545 has biased composition (acidic residues); sequence EKDELEEKDTELEKDEDP. Lysine 801 is modified (N6-(pyridoxal phosphate)lysine).

The protein belongs to the glycogen phosphorylase family. Pyridoxal 5'-phosphate is required as a cofactor.

It localises to the plastid. Its subcellular location is the chloroplast. The protein resides in the amyloplast. It catalyses the reaction [(1-&gt;4)-alpha-D-glucosyl](n) + phosphate = [(1-&gt;4)-alpha-D-glucosyl](n-1) + alpha-D-glucose 1-phosphate. Phosphorylase is an important allosteric enzyme in carbohydrate metabolism. Enzymes from different sources differ in their regulatory mechanisms and in their natural substrates. However, all known phosphorylases share catalytic and structural properties. This is Alpha-1,4 glucan phosphorylase L isozyme, chloroplastic/amyloplastic from Ipomoea batatas (Sweet potato).